The sequence spans 307 residues: Ornithine carbamoyltransferase (307 aa).

Carbamoyl phosphate is bound by residues 56–59 (STRT), glutamine 83, arginine 107, and 134–137 (HPCQ). Residues asparagine 165, aspartate 223, and 227–228 (SM) contribute to the L-ornithine site. Residues 263-264 (CL) and arginine 291 contribute to the carbamoyl phosphate site.

The protein belongs to the aspartate/ornithine carbamoyltransferase superfamily. OTCase family.

The protein resides in the cytoplasm. It carries out the reaction carbamoyl phosphate + L-ornithine = L-citrulline + phosphate + H(+). The protein operates within amino-acid biosynthesis; L-arginine biosynthesis; L-arginine from L-ornithine and carbamoyl phosphate: step 1/3. In terms of biological role, reversibly catalyzes the transfer of the carbamoyl group from carbamoyl phosphate (CP) to the N(epsilon) atom of ornithine (ORN) to produce L-citrulline. The polypeptide is Ornithine carbamoyltransferase (Cupriavidus metallidurans (strain ATCC 43123 / DSM 2839 / NBRC 102507 / CH34) (Ralstonia metallidurans)).